Reading from the N-terminus, the 395-residue chain is Phosphoglycerate kinase (395 aa).

Residues 20 to 22 (DLN), arginine 35, 58 to 61 (HFGR), arginine 117, and arginine 150 contribute to the substrate site. ATP contacts are provided by residues lysine 200, glutamate 322, and 352–355 (GGDT).

Belongs to the phosphoglycerate kinase family. Monomer.

It is found in the cytoplasm. The enzyme catalyses (2R)-3-phosphoglycerate + ATP = (2R)-3-phospho-glyceroyl phosphate + ADP. It participates in carbohydrate degradation; glycolysis; pyruvate from D-glyceraldehyde 3-phosphate: step 2/5. The polypeptide is Phosphoglycerate kinase (Brucella suis biovar 1 (strain 1330)).